Reading from the N-terminus, the 71-residue chain is Brevinin-1CG4 (71 aa).

The signal sequence occupies residues 1–22; that stretch reads MFTLKKSLLLLFFLGTINLSLC. Positions 23-45 are cleaved as a propeptide — removed in mature form; sequence EQERNADEEERRDDSDKRDVEVE. A disulfide bond links Cys-65 and Cys-71.

The protein belongs to the frog skin active peptide (FSAP) family. Brevinin subfamily. Expressed by the skin glands.

The protein localises to the secreted. Antimicrobial peptide active against a variety of Gram-positive and some Gram-negative bacterial strains. Has antifungal activity against C.albicans ATCC 10231 and a slime mold isolate. Has hemolytic activity against human erythrocytes. This is Brevinin-1CG4 from Amolops chunganensis (Chungan torrent frog).